A 518-amino-acid polypeptide reads, in one-letter code: Glutamate--cysteine ligase (518 aa).

The protein belongs to the glutamate--cysteine ligase type 1 family. Type 1 subfamily.

The enzyme catalyses L-cysteine + L-glutamate + ATP = gamma-L-glutamyl-L-cysteine + ADP + phosphate + H(+). It participates in sulfur metabolism; glutathione biosynthesis; glutathione from L-cysteine and L-glutamate: step 1/2. The polypeptide is Glutamate--cysteine ligase (Escherichia coli O139:H28 (strain E24377A / ETEC)).